An 803-amino-acid chain; its full sequence is Zinc finger and BTB domain-containing protein 17 (803 aa).

The BTB domain maps to 1-104 (MDFPQHSQHV…VATFLQMQDI (104 aa)). The tract at residues 116-295 (EPATSPGGNA…GLRSGTYGDR (180 aa)) is disordered. Phosphoserine is present on S120. The segment covering 132–142 (GGDKRAKEEKV) has biased composition (basic and acidic residues). Low complexity-rich tracts occupy residues 171 to 180 (GQAQSAASGA) and 206 to 217 (AAAEAEAALSES). Acidic residues-rich tracts occupy residues 233-244 (EQKEQEEQEEEG) and 261-272 (EAPEENENEESA). Residues 269–308 (EESAGTDSGQELGSEARGLRSGTYGDRTESKAYGSVIHKC) are interaction with MYC. 13 C2H2-type zinc fingers span residues 306–328 (HKCE…IRIH), 334–356 (FSCR…EKTH), 362–384 (YGCE…KKRH), 390–412 (YRCE…QLVH), 418–440 (YQCD…LETH), 446–468 (HKCP…LKIH), 474–496 (LKCR…LRIH), 502–524 (YVCI…VRIH), 530–552 (CQCV…VRQH), 558–580 (YVCE…IRHH), 586–608 (HKCS…IIIH), 614–637 (YLCD…KTVH), and 717–739 (YACD…VRIH). K397 participates in a covalent cross-link: Glycyl lysine isopeptide (Lys-Gly) (interchain with G-Cter in ubiquitin). Residue K481 forms a Glycyl lysine isopeptide (Lys-Gly) (interchain with G-Cter in ubiquitin) linkage. The interval 637–718 (HQGKAGIKIL…EDPNTHILYA (82 aa)) is interaction with MYC. The interval 637–803 (HQGKAGIKIL…TAPECPPPAE (167 aa)) is interaction with HCFC1. The segment at 779–803 (RDGAEGQPALAETSPTAPECPPPAE) is disordered.

It belongs to the krueppel C2H2-type zinc-finger protein family. Homooligomerizes (via the BTB/POZ domain), multimerization is required for DNA binding. Interacts (via the C-terminal zinc fingers) with GIF1; the interaction results in the recruitment of MYB to the CDKN1A/p21 and CDKN1B promoters and repression of transcription. Interacts with TRAF2, interfering with the binding of UBC13 to TRAF2, and inhibiting TRAF2 E3 ligase activity. Interacts with MYC (via the C-terminal helix-loop-helix motif); the interaction inhibits ZBTB17 transactivation and growth arrest activities and renders it insoluble in the nucleus. Also interacts with HCFC1, MAGEA4 and TMPRSS11A. Interacts with BCL6; the interaction inhibits ZBTB17 transactivation activity on target genes involved in cell cycle arrest. Interacts with ZBTB49 isoform 3/ZNF509S1; this interaction blocks ZBTB17-mediated repression of RB1. In terms of processing, undergoes 'Lys-48'-linked polyubiquitination at Lys-397 and Lys-481 and subsequent proteasomal degradation in a TRAF2-dependent manner. Expressed in germinal center B-cells.

Its subcellular location is the nucleus. Transcription factor that can function as an activator or repressor depending on its binding partners, and by targeting negative regulators of cell cycle progression. Plays a critical role in early lymphocyte development, where it is essential to prevent apoptosis in lymphoid precursors, allowing them to survive in response to IL7 and undergo proper lineage commitment. Has been shown to bind to the promoters of adenovirus major late protein and cyclin D1 and activate transcription. Required for early embryonic development during gastrulation. Represses RB1 transcription; this repression can be blocked by interaction with ZBTB49 isoform 3/ZNF509S1. This Homo sapiens (Human) protein is Zinc finger and BTB domain-containing protein 17 (ZBTB17).